The chain runs to 807 residues: MSEQGGLTPTILEEGQTEPESAPENGILKSESLDEEEKLELQRRLAAQNQERRKSKSGAGKGKLTRSLAVCEESSARSGGESHQDQESIHLQLSSFPSLQEEDKSRKDDSEREKEKDKNREKLSERPKIRMLSKDCSQEYTDSTGIDLHGFLINTLKNNSRDRMILLKMEQEMIDFIADSNNHYKKFPQMSSYQRMLVHRVAAYFGLDHNVDQTGKSVIINKTSSTRIPEQRFCEHLKDEKSEESQKRFILKRDNSSIDKEDNQNRMHPFRDDRRSKSIEEREEEYQRVRERIFAHDSVCSQESLFLDNSRLQEDMHICNETYKKRQLFRAHRDSSGRTSGSRQSSSETELRWPDHQRAWSSTDSDSSNRNLKPTMTKTASFGGITVLTRGDSTSSTRSAGKLSKTGSESSSSAGSSGSLSRTHPQSTALTSSVAAGSPGCMAYSENGMGGQVPPSSTSYILLPLESATGIPPGSILLNPHTGQPFVNPDGTPAIYNPPGSQQTLRGTVGGQPQQPPQQQPSPQPQQQVQASQPQMAGPLVTQREELAAQFSQLSMSRQSSGDTPEPPSGTVYPASLLPQTAQPQSYVITSAGQQLSTGGFSDSGPPISQQVLQAPPSPQGFVQQPPPAQMSVYYYPSGQYPTSTSQQYRPLASVQYSAQRSQQIPQTTQQAGYQPVLSGQQGFQGMMGVQQSAHSQGVMSSQQGAPVHGVMVSYPTMSSYQVPMTQGSQAVPQQTYQPPIMLPSQAGQGSLPATGMPVYCNVTPPNPQNNLRLMGPHCPSSTVPVMSASCRTNCGNVSNAGWQVKF.

A disordered region spans residues 1-127; that stretch reads MSEQGGLTPT…KNREKLSERP (127 aa). Ser-2 carries the post-translational modification N-acetylserine. Ser-32 is modified (phosphoserine). A coiled-coil region spans residues 32–57; that stretch reads SLDEEEKLELQRRLAAQNQERRKSKS. At Ser-55 the chain carries Phosphoserine; by PKA. A compositionally biased stretch (polar residues) spans 89 to 98; that stretch reads IHLQLSSFPS. Residues 101–127 show a composition bias toward basic and acidic residues; the sequence is EEDKSRKDDSEREKEKDKNREKLSERP. Ser-133 is modified (phosphoserine). The region spanning 163–226 is the R3H domain; it reads RMILLKMEQE…SVIINKTSST (64 aa). The region spanning 227–298 is the SUZ domain; the sequence is RIPEQRFCEH…VRERIFAHDS (72 aa). The segment at 245–282 is disordered; the sequence is SQKRFILKRDNSSIDKEDNQNRMHPFRDDRRSKSIEER. Asn-265 and Ser-298 each carry phosphoserine. Disordered stretches follow at residues 328 to 434, 474 to 536, 552 to 576, and 595 to 627; these read LFRA…TSSV, GSIL…QPQM, SQLS…YPAS, and QLST…QQPP. The span at 337 to 348 shows a compositional bias: low complexity; sequence GRTSGSRQSSSE. A compositionally biased stretch (basic and acidic residues) spans 349–358; the sequence is TELRWPDHQR. Over residues 359-380 the composition is skewed to polar residues; that stretch reads AWSSTDSDSSNRNLKPTMTKTA. Residues Ser-361 and Ser-381 each carry the phosphoserine modification. The segment covering 401-421 has biased composition (low complexity); the sequence is GKLSKTGSESSSSAGSSGSLS. The span at 422-434 shows a compositional bias: polar residues; it reads RTHPQSTALTSSV. The segment covering 514-524 has biased composition (pro residues); the sequence is QQPPQQQPSPQ. The segment covering 525 to 535 has biased composition (low complexity); it reads PQQQVQASQPQ. 2 stretches are compositionally biased toward polar residues: residues 552-563 and 595-613; these read SQLSMSRQSSGD and QLST…QQVL. At Ser-557 the chain carries Phosphoserine. Arg-650 bears the Asymmetric dimethylarginine mark.

As to quaternary structure, interacts with CALM1. In terms of processing, phosphorylation of isoform 2 at Ser-55 is enhanced upon dopamine D1 receptor activation and favors interaction with CALM1. Methylated by CARM1 at Arg-650 in immature thymocytes. In terms of tissue distribution, present at high levels in thymus and low levels in brain. In thymus, isoform 1 is specifically found in immature thymocytes (at protein level).

It is found in the cytoplasm. Functionally, may act as a competitive inhibitor of calmodulin-dependent enzymes such as calcineurin in neurons. This is cAMP-regulated phosphoprotein 21 (Arpp21) from Mus musculus (Mouse).